Here is a 422-residue protein sequence, read N- to C-terminus: UDP-N-acetylglucosamine 1-carboxyvinyltransferase (422 aa).

A phosphoenolpyruvate-binding site is contributed by 23–24 (KN). Position 92 (arginine 92) interacts with UDP-N-acetyl-alpha-D-glucosamine. Cysteine 116 functions as the Proton donor in the catalytic mechanism. Cysteine 116 carries the 2-(S-cysteinyl)pyruvic acid O-phosphothioketal modification. Residues 121–125 (RPVDL), 161–164 (KVSV), aspartate 306, and isoleucine 328 each bind UDP-N-acetyl-alpha-D-glucosamine.

Belongs to the EPSP synthase family. MurA subfamily.

Its subcellular location is the cytoplasm. It catalyses the reaction phosphoenolpyruvate + UDP-N-acetyl-alpha-D-glucosamine = UDP-N-acetyl-3-O-(1-carboxyvinyl)-alpha-D-glucosamine + phosphate. It functions in the pathway cell wall biogenesis; peptidoglycan biosynthesis. Functionally, cell wall formation. Adds enolpyruvyl to UDP-N-acetylglucosamine. This is UDP-N-acetylglucosamine 1-carboxyvinyltransferase from Aliivibrio fischeri (strain ATCC 700601 / ES114) (Vibrio fischeri).